A 162-amino-acid polypeptide reads, in one-letter code: NADH-quinone oxidoreductase subunit I (162 aa).

4Fe-4S ferredoxin-type domains are found at residues 53–83 (LRRY…IDSA) and 93–122 (TRYD…ETHI). Residues cysteine 63, cysteine 66, cysteine 69, cysteine 73, cysteine 102, cysteine 105, cysteine 108, and cysteine 112 each coordinate [4Fe-4S] cluster.

The protein belongs to the complex I 23 kDa subunit family. NDH-1 is composed of 14 different subunits. Subunits NuoA, H, J, K, L, M, N constitute the membrane sector of the complex. It depends on [4Fe-4S] cluster as a cofactor.

The protein resides in the cell inner membrane. It carries out the reaction a quinone + NADH + 5 H(+)(in) = a quinol + NAD(+) + 4 H(+)(out). In terms of biological role, NDH-1 shuttles electrons from NADH, via FMN and iron-sulfur (Fe-S) centers, to quinones in the respiratory chain. The immediate electron acceptor for the enzyme in this species is believed to be ubiquinone. Couples the redox reaction to proton translocation (for every two electrons transferred, four hydrogen ions are translocated across the cytoplasmic membrane), and thus conserves the redox energy in a proton gradient. This Xanthomonas axonopodis pv. citri (strain 306) protein is NADH-quinone oxidoreductase subunit I.